Here is a 152-residue protein sequence, read N- to C-terminus: Protein SprT-like (152 aa).

In terms of domain architecture, SprT-like spans 7-148 (QRLVEEVSLQ…GKCKGKLNLI (142 aa)). Position 67 (H67) interacts with Zn(2+). E68 is an active-site residue. H71 provides a ligand contact to Zn(2+).

The protein belongs to the SprT family. Zn(2+) is required as a cofactor.

The protein resides in the cytoplasm. This Bacillus anthracis (strain A0248) protein is Protein SprT-like.